Here is a 466-residue protein sequence, read N- to C-terminus: uncharacterized protein (466 aa).

In terms of domain architecture, Autotransporter spans 178–466 (SQGSASSMWM…QGMLGVKYSW (289 aa)).

This is an uncharacterized protein from Escherichia coli (strain K12).